Consider the following 380-residue polypeptide: Tubulin alpha chain (380 aa).

Residues E46, S115, G119, T120, T154, N181, and N202 each coordinate GTP. Mg(2+) is bound at residue E46. The active site involves E228.

This sequence belongs to the tubulin family. Dimer of alpha and beta chains. A typical microtubule is a hollow water-filled tube with an outer diameter of 25 nm and an inner diameter of 15 nM. Alpha-beta heterodimers associate head-to-tail to form protofilaments running lengthwise along the microtubule wall with the beta-tubulin subunit facing the microtubule plus end conferring a structural polarity. Microtubules usually have 13 protofilaments but different protofilament numbers can be found in some organisms and specialized cells. Mg(2+) is required as a cofactor.

It is found in the cytoplasm. The protein resides in the cytoskeleton. The enzyme catalyses GTP + H2O = GDP + phosphate + H(+). In terms of biological role, tubulin is the major constituent of microtubules, a cylinder consisting of laterally associated linear protofilaments composed of alpha- and beta-tubulin heterodimers. Microtubules grow by the addition of GTP-tubulin dimers to the microtubule end, where a stabilizing cap forms. Below the cap, tubulin dimers are in GDP-bound state, owing to GTPase activity of alpha-tubulin. The sequence is that of Tubulin alpha chain (TUB1) from Encephalitozoon hellem (Microsporidian parasite).